The chain runs to 161 residues: V-type proton ATPase 16 kDa proteolipid subunit c 2 (161 aa).

Topologically, residues 1–15 are lumenal; it reads MSYDLETAEHAAYAP. The helical transmembrane segment at 16–36 threads the bilayer; the sequence is FFGYMGAASAQIFTVLGAAYG. At 37 to 58 the chain is on the cytoplasmic side; that stretch reads TAKSAVGICSMGVMRPELIMKS. The helical transmembrane segment at 59 to 79 threads the bilayer; the sequence is VIPVIMAGIIGIYGLVVAMVL. The Lumenal segment spans residues 80-98; it reads KGKVQAASAGYDLNKGFAH. A helical membrane pass occupies residues 99–119; the sequence is LAAGLTCGLCGLGAGYAIGIV. Residues 120-137 lie on the Cytoplasmic side of the membrane; it reads GDAGVRGTAQQPRLFVGM. The chain crosses the membrane as a helical span at residues 138 to 158; it reads ILILIFSEVLGLYGMIVALIL. Topologically, residues 159–161 are lumenal; that stretch reads GTS.

Belongs to the V-ATPase proteolipid subunit family. V-ATPase is a heteromultimeric enzyme made up of two complexes: the ATP-hydrolytic V1 complex and the proton translocation V0 complex. The V1 complex consists of three catalytic AB heterodimers that form a heterohexamer, three peripheral stalks each consisting of EG heterodimers, one central rotor including subunits D and F, and the regulatory subunits C and H. The proton translocation complex V0 consists of the proton transport subunit a, a ring of proteolipid subunits c9c'', rotary subunit d, subunits e and f, and the accessory subunits vah-19/Ac45 and vah-20/PRR.

Its subcellular location is the membrane. In terms of biological role, proton-conducting pore forming subunit of the V0 complex of vacuolar(H+)-ATPase (V-ATPase), a multisubunit enzyme composed of a peripheral complex (V1) that hydrolyzes ATP and a membrane integral complex (V0) that translocates protons. V-ATPase is responsible for acidifying and maintaining the pH of intracellular compartments and in some cell types, is targeted to the plasma membrane, where it is responsible for acidifying the extracellular environment. Involved in necrotic cell death. Required along with other vacuolar ATPase components for the removal of protein aggregates which form in immature oocytes in the distal gonad. This removal occurs as the oocytes mature and move to the proximal gonad, is triggered by the introduction of sperm through mating and occurs before fertilization. The introduction of sperm triggers V-ATPase accumulation in proximal oocytes and induces lysosomal acidification which leads to engulfing of protein aggregates by lysosomes and subsequent clearance of the aggregates. Lysosomal acidification also leads to changes in mitochondrial morphology and function. Mitochondria in distal immature oocytes are fragmented, produce high levels of reactive oxygen species (ROS) and have high membrane potential, indicative of metabolic inactivity. In contrast, mitochondria in proximal mature oocytes are tubular with lower ROS levels and membrane potential, indicative of an active metabolic state required for aggregate mobilization before clearance. This chain is V-type proton ATPase 16 kDa proteolipid subunit c 2, found in Caenorhabditis briggsae.